Consider the following 68-residue polypeptide: Peptide Hp1412 (68 aa).

An N-terminal signal peptide occupies residues methionine 1–alanine 23. Cysteine 36 carries the cysteine amide modification. The propeptide occupies glycine 40 to arginine 68.

The protein belongs to the non-disulfide-bridged peptide (NDBP) superfamily. Short antimicrobial peptide (group 4) family. As to expression, expressed by the venom gland.

It localises to the secreted. Its subcellular location is the target cell membrane. In terms of biological role, amphipathic peptide with antimicrobial activity. This is Peptide Hp1412 from Heterometrus petersii (Asian forest scorpion).